The following is a 509-amino-acid chain: Zinc finger CCCH-type with G patch domain-containing protein (509 aa).

The disordered stretch occupies residues 41 to 61 (TRGSEPEATSDTKTPETSDNI). The span at 47–58 (EATSDTKTPETS) shows a compositional bias: polar residues. The C3H1-type zinc-finger motif lies at 155 to 178 (PCNYFLEGECRFDEVRCRYSHGAL). Positions 254–278 (DDDLTSESEESNETDGSDAGNDSDM) are disordered. The G-patch domain occupies 310–356 (TRGIGSKLMANMGYIHGTGLGSDGRGIVTPVSAQILPQGRSLDACME). Residues 410–433 (GSQQTENANKKTKPNNLQQHSNKT) are disordered. The segment covering 423–433 (PNNLQQHSNKT) has biased composition (polar residues).

It localises to the nucleus. Transcription repressor. This is Zinc finger CCCH-type with G patch domain-containing protein from Drosophila mojavensis (Fruit fly).